The sequence spans 126 residues: Aspartate 1-decarboxylase (126 aa).

Residue Ser25 is the Schiff-base intermediate with substrate; via pyruvic acid of the active site. Ser25 carries the post-translational modification Pyruvic acid (Ser). Thr57 contributes to the substrate binding site. The active-site Proton donor is the Tyr58. 73–75 (GAA) provides a ligand contact to substrate.

The protein belongs to the PanD family. As to quaternary structure, heterooctamer of four alpha and four beta subunits. Pyruvate is required as a cofactor. In terms of processing, is synthesized initially as an inactive proenzyme, which is activated by self-cleavage at a specific serine bond to produce a beta-subunit with a hydroxyl group at its C-terminus and an alpha-subunit with a pyruvoyl group at its N-terminus.

It localises to the cytoplasm. It carries out the reaction L-aspartate + H(+) = beta-alanine + CO2. It functions in the pathway cofactor biosynthesis; (R)-pantothenate biosynthesis; beta-alanine from L-aspartate: step 1/1. Functionally, catalyzes the pyruvoyl-dependent decarboxylation of aspartate to produce beta-alanine. The sequence is that of Aspartate 1-decarboxylase from Escherichia coli O6:H1 (strain CFT073 / ATCC 700928 / UPEC).